A 276-amino-acid chain; its full sequence is Rhomboid protease GlpG (276 aa).

Helical transmembrane passes span 94-114 (AGPL…LMQI), 142-162 (ALLH…WYLG), 168-188 (VLGT…SGWA), 193-213 (SGTY…YVWL), 229-249 (LMAF…GMSI), and 250-270 (ANAA…WDTY). The active-site Nucleophile is the S201. H254 is a catalytic residue.

This sequence belongs to the peptidase S54 family.

The protein resides in the cell inner membrane. The catalysed reaction is Cleaves type-1 transmembrane domains using a catalytic dyad composed of serine and histidine that are contributed by different transmembrane domains.. In terms of biological role, rhomboid-type serine protease that catalyzes intramembrane proteolysis. The sequence is that of Rhomboid protease GlpG from Pectobacterium atrosepticum (strain SCRI 1043 / ATCC BAA-672) (Erwinia carotovora subsp. atroseptica).